The primary structure comprises 96 residues: uncharacterized protein (96 aa).

A run of 2 helical transmembrane segments spans residues 27 to 47 and 50 to 70; these read LAFR…ALLI and LSGV…SIVF.

It is found in the cell membrane. This is an uncharacterized protein from Haemophilus influenzae (strain ATCC 51907 / DSM 11121 / KW20 / Rd).